We begin with the raw amino-acid sequence, 128 residues long: Fluoride-specific ion channel FluC (128 aa).

The next 4 helical transmembrane spans lie at 5–25 (IVAI…LSIG), 35–55 (LGTL…VVAF), 67–87 (LFVI…SVEV), and 96–116 (FGWA…LTGL). Na(+) contacts are provided by glycine 75 and threonine 78.

The protein belongs to the fluoride channel Fluc/FEX (TC 1.A.43) family.

It is found in the cell inner membrane. The enzyme catalyses fluoride(in) = fluoride(out). With respect to regulation, na(+) is not transported, but it plays an essential structural role and its presence is essential for fluoride channel function. In terms of biological role, fluoride-specific ion channel. Important for reducing fluoride concentration in the cell, thus reducing its toxicity. This is Fluoride-specific ion channel FluC from Burkholderia pseudomallei (strain 1106a).